The chain runs to 251 residues: Mlc titration factor A (251 aa).

4 residues coordinate Zn(2+): H111, H148, H152, and E211.

Belongs to the MtfA family. As to quaternary structure, interacts with Mlc. It depends on Zn(2+) as a cofactor.

It is found in the cytoplasm. Involved in the modulation of the activity of the glucose-phosphotransferase system (glucose-PTS). Interacts with the transcriptional repressor Mlc, preventing its interaction with DNA and leading to the modulation of expression of genes regulated by Mlc, including ptsG, which encodes the PTS system glucose-specific EIICB component. Functionally, shows zinc-dependent metallopeptidase activity. The sequence is that of Mlc titration factor A from Salmonella arizonae (strain ATCC BAA-731 / CDC346-86 / RSK2980).